Here is a 212-residue protein sequence, read N- to C-terminus: ATP-dependent Clp protease proteolytic subunit (212 aa).

Catalysis depends on S114, which acts as the Nucleophile. H139 is an active-site residue.

This sequence belongs to the peptidase S14 family. Fourteen ClpP subunits assemble into 2 heptameric rings which stack back to back to give a disk-like structure with a central cavity, resembling the structure of eukaryotic proteasomes.

It localises to the cytoplasm. The enzyme catalyses Hydrolysis of proteins to small peptides in the presence of ATP and magnesium. alpha-casein is the usual test substrate. In the absence of ATP, only oligopeptides shorter than five residues are hydrolyzed (such as succinyl-Leu-Tyr-|-NHMec, and Leu-Tyr-Leu-|-Tyr-Trp, in which cleavage of the -Tyr-|-Leu- and -Tyr-|-Trp bonds also occurs).. Functionally, cleaves peptides in various proteins in a process that requires ATP hydrolysis. Has a chymotrypsin-like activity. Plays a major role in the degradation of misfolded proteins. The protein is ATP-dependent Clp protease proteolytic subunit of Laribacter hongkongensis (strain HLHK9).